The following is an 88-amino-acid chain: Small ribosomal subunit protein bS16 (88 aa).

Belongs to the bacterial ribosomal protein bS16 family.

This chain is Small ribosomal subunit protein bS16, found in Geobacter metallireducens (strain ATCC 53774 / DSM 7210 / GS-15).